A 146-amino-acid chain; its full sequence is Transcriptional regulator MraZ (146 aa).

SpoVT-AbrB domains follow at residues 4 to 46 and 75 to 118; these read SYEK…SKKS and TIEV…SKEK.

It belongs to the MraZ family. As to quaternary structure, forms oligomers.

The protein localises to the cytoplasm. The protein resides in the nucleoid. The chain is Transcriptional regulator MraZ from Mycoplasma mobile (strain ATCC 43663 / 163K / NCTC 11711) (Mesomycoplasma mobile).